The sequence spans 1508 residues: Gem-associated protein 5 (1508 aa).

The segment at 1–124 (MGQEPRTLPP…LHWSPRVKDL (124 aa)) is important for interaction with U1 snRNA. Residues 13–15 (NWY) are interaction with U4 snRNA. Serine 48 carries the post-translational modification Phosphoserine. The residue at position 51 (threonine 51) is a Phosphothreonine. WD repeat units follow at residues 62–104 (GHTE…VVTE), 107–148 (LHQH…QHLF), 150–189 (EPRTIFCLTCSPHHEDLVAIGYKDGIVVIIDISKKGEVIH), 193–264 (GHDD…GVMI), 280–321 (TVKE…RRKY), 333–374 (HSRI…CSWT), 377–417 (SLGG…NNYD), 424–464 (GVKS…PPQI), 468–509 (YHKK…IVLQ), 533–573 (KYKL…LICT), and 576–622 (QHHK…ESSP). Serine 624 carries the post-translational modification Phosphoserine. WD repeat units follow at residues 637-677 (GHTA…PLCN) and 680-720 (GHRG…HSRP). Residues 715–790 (QDHSRPPQGK…EGEEQAREPE (76 aa)) are disordered. The segment covering 739 to 748 (AKPKKKKKPT) has biased composition (basic residues). Threonine 751 carries the post-translational modification Phosphothreonine. Lysine 754 participates in a covalent cross-link: Glycyl lysine isopeptide (Lys-Gly) (interchain with G-Cter in SUMO2). A phosphoserine mark is found at serine 757, serine 770, serine 778, and serine 847. Disordered stretches follow at residues 1313 to 1343 (EPSQQLDTASTEETDPETSQPEPNRPSELDL) and 1389 to 1428 (QKSQLCKSTANGPDKNEPEVEAEQPLCSSQSQCKEEKNEP). A coiled-coil region spans residues 1362–1393 (EKHASLQNSQRTVAEVQETLAEMIRQHQKSQL). Over residues 1390–1399 (KSQLCKSTAN) the composition is skewed to polar residues.

The protein belongs to the WD repeat gemin-5 family. In terms of assembly, part of the core SMN complex that contains SMN1, GEMIN2/SIP1, DDX20/GEMIN3, GEMIN4, GEMIN5, GEMIN6, GEMIN7, GEMIN8 and STRAP/UNRIP. Part of the SMN-Sm complex that contains SMN1, GEMIN2/SIP1, DDX20/GEMIN3, GEMIN4, GEMIN5, GEMIN6, GEMIN7, GEMIN8, STRAP/UNRIP and the Sm proteins SNRPB, SNRPD1, SNRPD2, SNRPD3, SNRPE, SNRPF and SNRPG. Interacts with GEMIN2; the interaction is direct. Interacts with SMN1, SNRPB, SNRPD1, SNRPD2, SNRPD3 and SNRPE; the interaction is direct. Interacts with cytosolic DDX20/GEMIN3 and GEMIN4. Interacts with SNRNP70 and HNRNPU. Identified in a complex with 80S ribosomes; binds to the 60S large ribosomal subunit. Interacts with the ribosomal subunits RPL3 and RPL4.

It is found in the nucleus. Its subcellular location is the nucleoplasm. The protein localises to the gem. It localises to the cytoplasm. Its function is as follows. The SMN complex catalyzes the assembly of small nuclear ribonucleoproteins (snRNPs), the building blocks of the spliceosome, and thereby plays an important role in the splicing of cellular pre-mRNAs. Most spliceosomal snRNPs contain a common set of Sm proteins SNRPB, SNRPD1, SNRPD2, SNRPD3, SNRPE, SNRPF and SNRPG that assemble in a heptameric protein ring on the Sm site of the small nuclear RNA to form the core snRNP (Sm core). In the cytosol, the Sm proteins SNRPD1, SNRPD2, SNRPE, SNRPF and SNRPG are trapped in an inactive 6S pICln-Sm complex by the chaperone CLNS1A that controls the assembly of the core snRNP. To assemble core snRNPs, the SMN complex accepts the trapped 5Sm proteins from CLNS1A forming an intermediate. Binding of snRNA inside 5Sm ultimately triggers eviction of the SMN complex, thereby allowing binding of SNRPD3 and SNRPB to complete assembly of the core snRNP. Within the SMN complex, GEMIN5 recognizes and delivers the small nuclear RNAs (snRNAs) to the SMN complex. Binds to the 7-methylguanosine cap of RNA molecules. Binds to the 3'-UTR of SMN1 mRNA and regulates its translation; does not affect mRNA stability. May play a role in the regulation of protein synthesis via its interaction with ribosomes. This Homo sapiens (Human) protein is Gem-associated protein 5 (GEMIN5).